Here is an 890-residue protein sequence, read N- to C-terminus: DNA mismatch repair protein MutS (890 aa).

Positions Met1–Pro13 are enriched in basic and acidic residues. Residues Met1–Asp23 form a disordered region. Position 649–656 (Gly649–Ser656) interacts with ATP.

Belongs to the DNA mismatch repair MutS family.

In terms of biological role, this protein is involved in the repair of mismatches in DNA. It is possible that it carries out the mismatch recognition step. This protein has a weak ATPase activity. The chain is DNA mismatch repair protein MutS from Paracidovorax citrulli (strain AAC00-1) (Acidovorax citrulli).